The sequence spans 449 residues: Exodeoxyribonuclease 7 large subunit (449 aa).

It belongs to the XseA family. As to quaternary structure, heterooligomer composed of large and small subunits.

The protein localises to the cytoplasm. It carries out the reaction Exonucleolytic cleavage in either 5'- to 3'- or 3'- to 5'-direction to yield nucleoside 5'-phosphates.. In terms of biological role, bidirectionally degrades single-stranded DNA into large acid-insoluble oligonucleotides, which are then degraded further into small acid-soluble oligonucleotides. The protein is Exodeoxyribonuclease 7 large subunit of Salmonella typhi.